The primary structure comprises 142 residues: Cell division protein SepF (142 aa).

It belongs to the SepF family. As to quaternary structure, homodimer. Interacts with FtsZ.

The protein localises to the cytoplasm. Its function is as follows. Cell division protein that is part of the divisome complex and is recruited early to the Z-ring. Probably stimulates Z-ring formation, perhaps through the cross-linking of FtsZ protofilaments. Its function overlaps with FtsA. The polypeptide is Cell division protein SepF (Geobacillus kaustophilus (strain HTA426)).